A 386-amino-acid chain; its full sequence is Protein U3 (386 aa).

This is Protein U3 (U3) from Human herpesvirus 6B (strain Z29) (HHV-6 variant B).